A 68-amino-acid polypeptide reads, in one-letter code: Peptide Smp13 (68 aa).

A signal peptide spans 1–23; that stretch reads MKTQFAIFLITLVLFQMFSQSDA. Phe-36 bears the Phenylalanine amide mark. Positions 37-68 are excised as a propeptide; that stretch reads GKRGLGDHDDLDELFDGEISQADIDFLKEIMQ.

The protein belongs to the non-disulfide-bridged peptide (NDBP) superfamily. Short antimicrobial peptide (group 4) family. As to expression, expressed by the venom gland.

The protein localises to the secreted. In terms of biological role, peptide with unknown function. Does not show antimicrobial activity against the Gram-positive, and Gram-negative bacteria tested, as well as against the fungus C.albicans. This Scorpio palmatus (Israeli golden scorpion) protein is Peptide Smp13.